A 74-amino-acid polypeptide reads, in one-letter code: Exodeoxyribonuclease 7 small subunit (74 aa).

This sequence belongs to the XseB family. In terms of assembly, heterooligomer composed of large and small subunits.

The protein localises to the cytoplasm. It carries out the reaction Exonucleolytic cleavage in either 5'- to 3'- or 3'- to 5'-direction to yield nucleoside 5'-phosphates.. Its function is as follows. Bidirectionally degrades single-stranded DNA into large acid-insoluble oligonucleotides, which are then degraded further into small acid-soluble oligonucleotides. In Neisseria gonorrhoeae (strain ATCC 700825 / FA 1090), this protein is Exodeoxyribonuclease 7 small subunit.